Reading from the N-terminus, the 123-residue chain is Large ribosomal subunit protein bL12 (123 aa).

This sequence belongs to the bacterial ribosomal protein bL12 family. As to quaternary structure, homodimer. Part of the ribosomal stalk of the 50S ribosomal subunit. Forms a multimeric L10(L12)X complex, where L10 forms an elongated spine to which 2 to 4 L12 dimers bind in a sequential fashion. Binds GTP-bound translation factors.

Its function is as follows. Forms part of the ribosomal stalk which helps the ribosome interact with GTP-bound translation factors. Is thus essential for accurate translation. In Marinomonas sp. (strain MWYL1), this protein is Large ribosomal subunit protein bL12.